A 758-amino-acid chain; its full sequence is Translation initiation factor IF-2 (758 aa).

Residues 55 to 168 (EKNVGKQATQ…KTHQPSIPVK (114 aa)) are disordered. 2 stretches are compositionally biased toward polar residues: residues 60 to 78 (KQAT…QQNH) and 86 to 95 (QRQQSATSKP). The segment covering 96–136 (KVNNQQHSNSSNEKSKNTKGNQNRNMTQNNNNNNNNNNNNR) has biased composition (low complexity). The tr-type G domain occupies 259 to 428 (ERPPVVTIMG…LLVAEVGELK (170 aa)). Residues 268–275 (GHVDHGKT) are G1. 268–275 (GHVDHGKT) contacts GTP. The interval 293 to 297 (GITQH) is G2. The G3 stretch occupies residues 314–317 (DTPG). GTP-binding positions include 314 to 318 (DTPGH) and 368 to 371 (NKMD). The G4 stretch occupies residues 368–371 (NKMD). The segment at 404–406 (SAL) is G5.

Belongs to the TRAFAC class translation factor GTPase superfamily. Classic translation factor GTPase family. IF-2 subfamily.

It localises to the cytoplasm. One of the essential components for the initiation of protein synthesis. Protects formylmethionyl-tRNA from spontaneous hydrolysis and promotes its binding to the 30S ribosomal subunits. Also involved in the hydrolysis of GTP during the formation of the 70S ribosomal complex. This is Translation initiation factor IF-2 from Lysinibacillus sphaericus (strain C3-41).